The sequence spans 407 residues: E3 ubiquitin-protein ligase TRIM13 (407 aa).

Residues 10–58 form an RING-type zinc finger; it reads CPICCSLFDDPRVLPCSHNFCKKCLEGLLEGNVRNSLWRPSPFKCPTCR. The B box-type zinc-finger motif lies at 89 to 131; the sequence is PKMPVCKEHLGQPLNIFCVTDMQLICGVCATRGSHTKHVFSSI. Residues cysteine 94, histidine 97, cysteine 117, and histidine 123 each coordinate Zn(2+). Residues 172–200 adopt a coiled-coil conformation; that stretch reads LQLLTKDSDKVKEFFEKLQHTLDQKKNEI. The helical transmembrane segment at 316-336 threads the bilayer; that stretch reads LLLMAVVLLGLLVFFGPTVFL.

In terms of assembly, interacts (via C-terminal domain) with VCP. Interacts with AKT1; the interaction ubiquitinates AKT1 and leads to its proteasomal degradation. Interacts with MDM2; the interaction ubiquitinates AKT1 and leads to its proteasomal degradation. Interacts with p62/SQSTM1. Interacts with TRAF6. Interacts with IKBKG/NEMO. Post-translationally, auto-ubiquitinated; requires the RING-type zinc finger. Auto-polyubiquitination leads to proteasomal degradation.

The protein localises to the endoplasmic reticulum membrane. The catalysed reaction is S-ubiquitinyl-[E2 ubiquitin-conjugating enzyme]-L-cysteine + [acceptor protein]-L-lysine = [E2 ubiquitin-conjugating enzyme]-L-cysteine + N(6)-ubiquitinyl-[acceptor protein]-L-lysine.. Its pathway is protein modification; protein ubiquitination. In terms of biological role, endoplasmic reticulum (ER) membrane anchored E3 ligase involved in the retrotranslocation and turnover of membrane and secretory proteins from the ER through a set of processes named ER-associated degradation (ERAD). This process acts on misfolded proteins as well as in the regulated degradation of correctly folded proteins. Enhances ionizing radiation-induced p53/TP53 stability and apoptosis via ubiquitinating MDM2 and AKT1 and decreasing AKT1 kinase activity through MDM2 and AKT1 proteasomal degradation. Regulates ER stress-induced autophagy, and may act as a tumor suppressor. Also plays a role in innate immune response by stimulating NF-kappa-B activity in the TLR2 signaling pathway. Ubiquitinates TRAF6 via the 'Lys-29'-linked polyubiquitination chain resulting in NF-kappa-B activation. Participates as well in T-cell receptor-mediated NF-kappa-B activation. In the presence of TNF, modulates the IKK complex by regulating IKBKG/NEMO ubiquitination leading to the repression of NF-kappa-B. This chain is E3 ubiquitin-protein ligase TRIM13 (Trim13), found in Rattus norvegicus (Rat).